The following is a 252-amino-acid chain: tRNA pseudouridine synthase A (252 aa).

The active-site Nucleophile is Asp-54. Tyr-112 lines the substrate pocket.

The protein belongs to the tRNA pseudouridine synthase TruA family. In terms of assembly, homodimer.

The enzyme catalyses uridine(38/39/40) in tRNA = pseudouridine(38/39/40) in tRNA. Its function is as follows. Formation of pseudouridine at positions 38, 39 and 40 in the anticodon stem and loop of transfer RNAs. The chain is tRNA pseudouridine synthase A from Oenococcus oeni (strain ATCC BAA-331 / PSU-1).